Here is a 672-residue protein sequence, read N- to C-terminus: Zinc finger and BTB domain-containing protein 24 (672 aa).

The BTB domain maps to 39-105 (CDITLIVEDV…MYSAVVLVDE (67 aa)). Residues 136-208 (HMQVKRKRGR…GKRKIKQPIR (73 aa)) are disordered. Residues 140–152 (KRKRGRPKKNQDL) constitute a DNA-binding region (a.T hook 1). Positions 148-158 (KNQDLSQKENP) are enriched in basic and acidic residues. Over residues 160–171 (SELQAQTSSEIQ) the composition is skewed to polar residues. Basic residues predominate over residues 198 to 208 (EGKRKIKQPIR). The a.T hook 2 DNA-binding region spans 223-235 (PGKRGRRRKYPDT). 8 C2H2-type zinc fingers span residues 237–259 (ARCE…QRTH), 265–287 (FRCS…QRMH), 293–315 (YICT…MNLH), 321–343 (FTCE…NRVH), 349–371 (PECA…LRTH), 377–399 (FTCE…IRIH), 405–427 (YVCK…EVSH), and 433–455 (FSCS…IKTH). A disordered region spans residues 453 to 492 (KTHNKENPPAQAESTDKPPQSAPEQQEQEQQQQQQTSGDK). The span at 476-487 (EQQEQEQQQQQQ) shows a compositional bias: low complexity.

This sequence belongs to the krueppel C2H2-type zinc-finger protein family.

The protein resides in the nucleus. In terms of biological role, may be involved in BMP2-induced transcription. The polypeptide is Zinc finger and BTB domain-containing protein 24 (zbtb24) (Danio rerio (Zebrafish)).